Reading from the N-terminus, the 152-residue chain is Deoxyuridine 5'-triphosphate nucleotidohydrolase (152 aa).

Substrate is bound by residues 62-64, asparagine 75, and 79-81; these read RSG and TVD.

This sequence belongs to the dUTPase family. Mg(2+) serves as cofactor.

The enzyme catalyses dUTP + H2O = dUMP + diphosphate + H(+). Its pathway is pyrimidine metabolism; dUMP biosynthesis; dUMP from dCTP (dUTP route): step 2/2. Its function is as follows. This enzyme is involved in nucleotide metabolism: it produces dUMP, the immediate precursor of thymidine nucleotides and it decreases the intracellular concentration of dUTP so that uracil cannot be incorporated into DNA. The polypeptide is Deoxyuridine 5'-triphosphate nucleotidohydrolase (Leifsonia xyli subsp. xyli (strain CTCB07)).